We begin with the raw amino-acid sequence, 1321 residues long: MYFLSGWPRRLLCPLRSDERPFRIEPSAQRFYLAVLSETQISIWFSRPSVLIVSYIESGKAAAQFGFYQQVEWKPDDSMIAVAAANGYVLLFDIIGGLDDKYLYEPVYPKGSARVKVTPGYKEEQCAPALTLEMKKPVDLEAPISCLQSLAEDLLVATADGFLHMLHWDSVSNGRRAVNLCTIPFSLDLQSSRGGPCLDLDGVYIRDLEYCATLDGFAVVFDDGRIGFITPTANRLATDQLQGVWAADVTDGTCVAVNNKYRLMAFGCTSGSVLVYMIDSSTGCMQLSHKLELTPKHYPDIWNKTGPVKMIRWSPDCSVAMVTWECGGLSLWSVFGAHLICTLGEDFAYRSDGTKKDPLKISSMSWGVEGYHLWVIRSSDSTVTEEKQEKLQQNTILQFQFIKSSNQEQVLLQGEDRLYVTCGDPTQTQTPGQCRSSSTAPLSQGLSTLLGHKHWQVVQIHSTYLETNWPIRVRNAHDRRRVTLIMLMLTDHYAVCEQNMTVTGGLAWWNDFVVVACYNFIDRQEELRLYVRSANLDNAFASITKLHADTLLLNVFRNMVILFRADCSICLYSIERRHDGPSPSASVELLQEVSMSRYIPHPGLVVSVTLTSVRTESGITLKAPQQACSAESILLNLAGQLIMLQRDRSGPQVREKDAPANHSKLLPFCPPVVLAQCVESVWTSSRSNRKKRHLMEALWLSCGEAGMKVWLPLFPRDHRKPHSFLSRRIMLPFHINIYPLTVLFEDALILGASNETVLFDGLSSSAEPLEALFPYCTVERTSQIYLHHILRQLLVRNLGEQALMLAQSCASLPYFPHVLELMVHVVLEEEATSREPIPDPLLPTVAKFVTEFPLFLQTIVHCARKTEYALWNYLFAAVGNPKDLFEECLMAQDLDTAASYLIILQNMEVPAVSRQHATLLFNTALEQGKWDLCRHMIRFLKAIGSGESETPPTTPTTQEQSPSSGFEFFRNRSISLSQSADSIAAGKFNLQKTMSMPTGPSSKSDSAENLYIDVMLWRHARRLLEQVRLRDLGCFSAQLGFELIGWLCRERTRVARVDDFVTALKCLHKDFLWPFPVIPACTISSPLKNGRCRPVLSSRLLKSQSADSLLNSEMDTTPPQVSTANHRWLDGLGAVSKELDSASSHGGPQTQEAFLSPLISKGEQVSDIYLYFHPSIHPIHLSIHPSIVLFIHSSFYPSIHPSFHPSIHPSIVLSIHPSIHRSIYLSIHPSIHPSIHPSIVLFIHPSIVPSIHPSIHPSIHPLFYLSIHPSIHPSIHRSIHPSIHRSIYPSIHRSIHPSIHRSIYPFIHPSIVLSIHPSIHC.

WD repeat units lie at residues 63 to 102 (AQFGFYQQVEWKPDDSMIAVAAANGYVLLFDIIGGLDDKY) and 303 to 342 (NKTGPVKMIRWSPDCSVAMVTWECGGLSLWSVFGAHLICT). The disordered stretch occupies residues 945-964 (SGESETPPTTPTTQEQSPSS).

In terms of assembly, forms a complex with rgp1; the interaction enhances rab6a GTPase activity.

Its subcellular location is the cytoplasm. It is found in the cytosol. The protein resides in the membrane. Functionally, the RIC1-RGP1 complex acts as a guanine nucleotide exchange factor (GEF), which activates RAB6A by exchanging bound GDP for free GTP, and may be thereby required for efficient fusion of endosome-derived vesicles with the Golgi compartment. The RIC1-RGP1 complex participates in the recycling of mannose-6-phosphate receptors. It is a regulator of procollagen transport and secretion, and is required for correct cartilage morphogenesis and development of the craniofacial skeleton. This Danio rerio (Zebrafish) protein is Guanine nucleotide exchange factor subunit RIC1 (ric1).